Reading from the N-terminus, the 242-residue chain is Flavin prenyltransferase PAD1, mitochondrial (242 aa).

The transit peptide at 1–58 directs the protein to the mitochondrion; it reads MLLFPRRTNIAFFKTTGIFANFPLLGRTITTSPSFLTHKLSKEVTRASTSPPRPKRIV. Residues 63–65, S89, 140–143, and R175 contribute to the FMN site; these read GAT and SMKS. Y205 and R221 together coordinate dimethylallyl phosphate.

This sequence belongs to the UbiX/PAD1 family. Oligomer.

The protein resides in the mitochondrion. The catalysed reaction is dimethylallyl phosphate + FMNH2 = prenylated FMNH2 + phosphate. In terms of biological role, flavin prenyltransferase that catalyzes the synthesis of the prenylated FMN cofactor (prenyl-FMN) for the ferulic acid decarboxylase FDC1/ubiD. The prenyltransferase is metal-independent and links a dimethylallyl moiety from dimethylallyl monophosphate (DMAP) to the flavin N5 and C6 atoms of FMN. Involved in the decarboxylation of phenylacrylic acids like ferulic acid, p-coumaric acid or cinnamic acid, producing the corresponding vinyl derivatives which play the role of aroma metabolites. Also involved in the degradation of the food preservative sorbic acid (2,4-hexadienoic acid) to a volatile hydrocarbon, 1,3-pentadiene. Not essential for ubiquinone synthesis. Can rescue Q biosynthesis in E.coli strains lacking UbiX. Has mRNA binding activity. The chain is Flavin prenyltransferase PAD1, mitochondrial from Saccharomyces cerevisiae (strain ATCC 204508 / S288c) (Baker's yeast).